Reading from the N-terminus, the 493-residue chain is Tripartite motif-containing protein 5 (493 aa).

An N-acetylalanine modification is found at Ala2. The RING-type zinc finger occupies 15–59; that stretch reads CPICLELLTQPLSLDCGHSFCQACLTANHEKSMLDKGESSCPVCR. Ser86 is subject to Phosphoserine. A B box-type zinc finger spans residues 90–132; the sequence is QKVDHCARHGEKLLLFCQEDGKVICWLCERSQEHRGHHTFLTE. The Zn(2+) site is built by Cys95, His98, Cys117, and His123. The stretch at 131–240 forms a coiled coil; that stretch reads TEEVAQECQV…LISDLEHRLQ (110 aa). Residues 185–198 are required for interaction with GABARAP and for autophagy; that stretch reads FEQLRDILDWEESN. The B30.2/SPRY domain occupies 281–493; it reads LKGMLEVFRE…VPMTLCSPSS (213 aa).

The protein belongs to the TRIM/RBCC family. In terms of assembly, can form homodimers and homotrimers. In addition to lower-order dimerization, also exhibits a higher-order multimerization and both low- and high-order multimerizations are essential for its restriction activity. Interacts with BTBD1 and BTBD2. Interacts with PSMC4, PSMC5, PSMD7 and HSPA8/HSC70. Interacts (via B30.2/SPRY domain) with HSPA1A/B. Interacts with PSMC2, MAP3K7/TAK1, TAB2 and TAB3. Interacts with SQSTM1. Interacts with TRIM6 and TRIM34. Interacts with ULK1 (phosphorylated form), GABARAP, GABARAPL1, GABARAPL2, MAP1LC3A, MAP1LC3C and BECN1. Post-translationally, degraded in a proteasome-independent fashion in the absence of viral infection but in a proteasome-dependent fashion following exposure to restriction sensitive virus. Autoubiquitinated in a RING finger- and UBE2D2-dependent manner. Monoubiquitinated by TRIM21. Deubiquitinated by Yersinia YopJ. Ubiquitination may not lead to proteasomal degradation.

The protein resides in the cytoplasm. It localises to the nucleus. It catalyses the reaction S-ubiquitinyl-[E2 ubiquitin-conjugating enzyme]-L-cysteine + [acceptor protein]-L-lysine = [E2 ubiquitin-conjugating enzyme]-L-cysteine + N(6)-ubiquitinyl-[acceptor protein]-L-lysine.. Its pathway is protein modification; protein ubiquitination. Its function is as follows. Capsid-specific restriction factor that prevents infection from non-host-adapted retroviruses. Blocks viral replication early in the life cycle, after viral entry but before reverse transcription. In addition to acting as a capsid-specific restriction factor, also acts as a pattern recognition receptor that activates innate immune signaling in response to the retroviral capsid lattice. Binding to the viral capsid triggers its E3 ubiquitin ligase activity, and in concert with the heterodimeric ubiquitin conjugating enzyme complex UBE2V1-UBE2N (also known as UBC13-UEV1A complex) generates 'Lys-63'-linked polyubiquitin chains, which in turn are catalysts in the autophosphorylation of the MAP3K7/TAK1 complex (includes TAK1, TAB2, and TAB3). Activation of the MAP3K7/TAK1 complex by autophosphorylation results in the induction and expression of NF-kappa-B and MAPK-responsive inflammatory genes, thereby leading to an innate immune response in the infected cell. Plays a role in regulating autophagy through activation of autophagy regulator BECN1 by causing its dissociation from its inhibitors BCL2 and TAB2. The polypeptide is Tripartite motif-containing protein 5 (TRIM5) (Gorilla gorilla gorilla (Western lowland gorilla)).